The sequence spans 266 residues: Nickel import ATP-binding protein NikE (266 aa).

Positions Ile4 to Glu252 constitute an ABC transporter domain. ATP is bound at residue Gly45 to Ser52.

Belongs to the ABC transporter superfamily. Nickel importer (TC 3.A.1.5.3) family. The complex is composed of two ATP-binding proteins (NikD and NikE), two transmembrane proteins (NikB and NikC) and a solute-binding protein (NikA).

The protein localises to the cell inner membrane. The enzyme catalyses Ni(2+)(out) + ATP + H2O = Ni(2+)(in) + ADP + phosphate + H(+). Its function is as follows. Part of the ABC transporter complex NikABCDE involved in nickel import. Responsible for energy coupling to the transport system. In Brucella suis biovar 1 (strain 1330), this protein is Nickel import ATP-binding protein NikE.